Here is a 416-residue protein sequence, read N- to C-terminus: Cytochrome P450 monooxygenase PikC (416 aa).

Substrate contacts are provided by residues Glu94, 187–191 (AQTAM), and 238–246 (HILLVAGHE). Cys354 contacts heme.

Belongs to the cytochrome P450 family. It depends on heme as a cofactor.

It carries out the reaction narbomycin + 2 reduced [2Fe-2S]-[ferredoxin] + O2 + 2 H(+) = pikromycin + 2 oxidized [2Fe-2S]-[ferredoxin] + H2O. It catalyses the reaction narbomycin + 2 reduced [2Fe-2S]-[ferredoxin] + O2 + 2 H(+) = neopikromycin + 2 oxidized [2Fe-2S]-[ferredoxin] + H2O. The catalysed reaction is narbomycin + 4 reduced [2Fe-2S]-[ferredoxin] + 2 O2 + 4 H(+) = novapikromycin + 4 oxidized [2Fe-2S]-[ferredoxin] + 2 H2O. The enzyme catalyses 10-deoxymethymycin + 2 reduced [2Fe-2S]-[ferredoxin] + O2 + 2 H(+) = methymycin + 2 oxidized [2Fe-2S]-[ferredoxin] + H2O. It carries out the reaction 10-deoxymethymycin + 2 reduced [2Fe-2S]-[ferredoxin] + O2 + 2 H(+) = neomethymycin + 2 oxidized [2Fe-2S]-[ferredoxin] + H2O. It catalyses the reaction 10-deoxymethymycin + 4 reduced [2Fe-2S]-[ferredoxin] + 2 O2 + 4 H(+) = novamethymycin + 4 oxidized [2Fe-2S]-[ferredoxin] + 2 H2O. It functions in the pathway antibiotic biosynthesis. Functionally, catalyzes the hydroxylation of narbomycin to give rise to pikromycin, and of 10-deoxymethymycin (YC-17) to give rise to methymycin and neomethymycin during macrolide antibiotic biosynthesis. In addition, produces low amounts of neopicromycin, novapikromycin and novamethymycin. Requires the participation of a ferredoxin and a ferredoxin reductase for the transfer of electrons from NADPH to the monooxygenase. The sequence is that of Cytochrome P450 monooxygenase PikC from Streptomyces venezuelae.